Consider the following 660-residue polypeptide: tRNA 5-methylaminomethyl-2-thiouridine biosynthesis bifunctional protein MnmC (660 aa).

The segment at 1–242 (MTDRIVPATL…KRAMLVGEFA (242 aa)) is tRNA (mnm(5)s(2)U34)-methyltransferase. Residues 266–660 (IGAGLAGCAV…VRALRHGRVA (395 aa)) form an FAD-dependent cmnm(5)s(2)U34 oxidoreductase region.

This sequence in the N-terminal section; belongs to the methyltransferase superfamily. tRNA (mnm(5)s(2)U34)-methyltransferase family. In the C-terminal section; belongs to the DAO family. Requires FAD as cofactor.

Its subcellular location is the cytoplasm. It carries out the reaction 5-aminomethyl-2-thiouridine(34) in tRNA + S-adenosyl-L-methionine = 5-methylaminomethyl-2-thiouridine(34) in tRNA + S-adenosyl-L-homocysteine + H(+). Functionally, catalyzes the last two steps in the biosynthesis of 5-methylaminomethyl-2-thiouridine (mnm(5)s(2)U) at the wobble position (U34) in tRNA. Catalyzes the FAD-dependent demodification of cmnm(5)s(2)U34 to nm(5)s(2)U34, followed by the transfer of a methyl group from S-adenosyl-L-methionine to nm(5)s(2)U34, to form mnm(5)s(2)U34. The polypeptide is tRNA 5-methylaminomethyl-2-thiouridine biosynthesis bifunctional protein MnmC (Burkholderia mallei (strain NCTC 10247)).